Reading from the N-terminus, the 336-residue chain is N-acetylornithine carbamoyltransferase (336 aa).

Carbamoyl phosphate-binding positions include S49 to T52, W77, and R112. E144 serves as a coordination point for N(2)-acetyl-L-ornithine. Carbamoyl phosphate is bound at residue H148 to Q151. Residues K252 and L295 each contribute to the N(2)-acetyl-L-ornithine site. Residue C294 to L295 participates in carbamoyl phosphate binding. K302 carries the post-translational modification N6-carboxylysine. R322 is a carbamoyl phosphate binding site.

The protein belongs to the aspartate/ornithine carbamoyltransferase superfamily. AOTCase family. Homotrimer.

The protein resides in the cytoplasm. It carries out the reaction N(2)-acetyl-L-ornithine + carbamoyl phosphate = N(2)-acetyl-L-citrulline + phosphate + H(+). The protein operates within amino-acid biosynthesis; L-arginine biosynthesis. Carboxylation at Lys-302 increases the catalytic activity of the enzyme. In terms of biological role, catalyzes the transfer of the carbamoyl group from carbamoyl phosphate to the delta-amino group of N(2)-acetyl-L-ornithine to produce N(2)-acetyl-L-citrulline. This is a step in an alternative arginine biosynthesis pathway. The enzyme has no activity with ornithine. This Xylella fastidiosa (strain 9a5c) protein is N-acetylornithine carbamoyltransferase.